Consider the following 258-residue polypeptide: Hydroxyacylglutathione hydrolase (258 aa).

The Zn(2+) site is built by H52, H54, D56, H57, H109, D126, and H164.

This sequence belongs to the metallo-beta-lactamase superfamily. Glyoxalase II family. In terms of assembly, monomer. Requires Zn(2+) as cofactor.

The enzyme catalyses an S-(2-hydroxyacyl)glutathione + H2O = a 2-hydroxy carboxylate + glutathione + H(+). Its pathway is secondary metabolite metabolism; methylglyoxal degradation; (R)-lactate from methylglyoxal: step 2/2. Thiolesterase that catalyzes the hydrolysis of S-D-lactoyl-glutathione to form glutathione and D-lactic acid. The polypeptide is Hydroxyacylglutathione hydrolase (Xylella fastidiosa (strain M12)).